The sequence spans 392 residues: Speckle-type POZ protein-like (392 aa).

In terms of domain architecture, MATH spans 31-161 (KFSYMWTINN…DDKLTLFCEV (131 aa)). The BTB domain occupies 200 to 267 (TDCSFFVRGQ…IYTGRAPNLD (68 aa)).

This sequence belongs to the Tdpoz family. As to quaternary structure, homodimer. Heterodimer with SPOP. Component of cullin-RING-based BCR (BTB-CUL3-RBX1) E3 ubiquitin-protein ligase complexes containing homodimeric SPOPL or the heterodimer formed by SPOP and SPOPL. Interacts with CUL3 and MACROH2A1.

It is found in the nucleus. It participates in protein modification; protein ubiquitination. Its function is as follows. Component of a cullin-RING-based BCR (BTB-CUL3-RBX1) E3 ubiquitin-protein ligase complex that mediates the ubiquitination and subsequent proteasomal degradation of target proteins, but with relatively low efficiency. Cullin-RING-based BCR (BTB-CUL3-RBX1) E3 ubiquitin-protein ligase complexes containing homodimeric SPOPL or the heterodimer formed by SPOP and SPOPL are less efficient than ubiquitin ligase complexes containing only SPOP. May function to down-regulate the activity of cullin-RING-based BCR (BTB-CUL3-RBX1) E3 ubiquitin-protein ligase complexes that contain SPOP. In Homo sapiens (Human), this protein is Speckle-type POZ protein-like (SPOPL).